A 779-amino-acid chain; its full sequence is Phosphoribosylformylglycinamidine synthase subunit PurL (779 aa).

Residue His52 is part of the active site. ATP contacts are provided by Tyr55 and Lys94. Glu96 contacts Mg(2+). Substrate is bound by residues 97–100 and Arg119; that span reads SHNH. His98 acts as the Proton acceptor in catalysis. A Mg(2+)-binding site is contributed by Asp120. Gln243 contributes to the substrate binding site. Asp271 lines the Mg(2+) pocket. 315 to 317 is a binding site for substrate; the sequence is ESQ. Asn523 and Gly560 together coordinate ATP. A Mg(2+)-binding site is contributed by Asn561. Residue Ser563 participates in substrate binding.

Belongs to the FGAMS family. As to quaternary structure, monomer. Part of the FGAM synthase complex composed of 1 PurL, 1 PurQ and 2 PurS subunits.

It is found in the cytoplasm. The catalysed reaction is N(2)-formyl-N(1)-(5-phospho-beta-D-ribosyl)glycinamide + L-glutamine + ATP + H2O = 2-formamido-N(1)-(5-O-phospho-beta-D-ribosyl)acetamidine + L-glutamate + ADP + phosphate + H(+). It functions in the pathway purine metabolism; IMP biosynthesis via de novo pathway; 5-amino-1-(5-phospho-D-ribosyl)imidazole from N(2)-formyl-N(1)-(5-phospho-D-ribosyl)glycinamide: step 1/2. Functionally, part of the phosphoribosylformylglycinamidine synthase complex involved in the purines biosynthetic pathway. Catalyzes the ATP-dependent conversion of formylglycinamide ribonucleotide (FGAR) and glutamine to yield formylglycinamidine ribonucleotide (FGAM) and glutamate. The FGAM synthase complex is composed of three subunits. PurQ produces an ammonia molecule by converting glutamine to glutamate. PurL transfers the ammonia molecule to FGAR to form FGAM in an ATP-dependent manner. PurS interacts with PurQ and PurL and is thought to assist in the transfer of the ammonia molecule from PurQ to PurL. The chain is Phosphoribosylformylglycinamidine synthase subunit PurL from Prochlorococcus marinus (strain MIT 9515).